The chain runs to 104 residues: Replication restart protein PriB (104 aa).

In terms of domain architecture, SSB spans 1 to 101 (MTNRLALSGT…LHAEQIELID (101 aa)).

Belongs to the PriB family. As to quaternary structure, homodimer. Interacts with PriA and DnaT. Component of the replication restart primosome. Primosome assembly occurs via a 'hand-off' mechanism. PriA binds to replication forks, subsequently PriB then DnaT bind; DnaT then displaces ssDNA to generate the helicase loading substrate.

Involved in the restart of stalled replication forks, which reloads the replicative helicase on sites other than the origin of replication; the PriA-PriB pathway is the major replication restart pathway. During primosome assembly it facilitates complex formation between PriA and DnaT on DNA; stabilizes PriA on DNA. Stimulates the DNA unwinding activity of PriA helicase. The polypeptide is Replication restart protein PriB (Citrobacter koseri (strain ATCC BAA-895 / CDC 4225-83 / SGSC4696)).